The following is an 88-amino-acid chain: Beta-insect excitatory toxin LqhIT1a (88 aa).

Residues 1-18 form the signal peptide; sequence MKFFLLFLVVLPIMGVLG. Residues 20-83 enclose the LCN-type CS-alpha/beta domain; the sequence is KNGYAVDSKG…ISGTTKKYCD (64 aa). 4 disulfide bridges follow: Cys34–Cys55, Cys40–Cys60, Cys44–Cys62, and Cys56–Cys82.

It belongs to the long (4 C-C) scorpion toxin superfamily. Sodium channel inhibitor family. Beta subfamily. In terms of tissue distribution, expressed by the venom gland.

Its subcellular location is the secreted. Functionally, excitatory insect toxins induce a spastic paralysis. They bind voltage-independently at site-4 of sodium channels (Nav) and shift the voltage of activation toward more negative potentials thereby affecting sodium channel activation and promoting spontaneous and repetitive firing. The protein is Beta-insect excitatory toxin LqhIT1a of Leiurus hebraeus (Hebrew deathstalker scorpion).